A 336-amino-acid polypeptide reads, in one-letter code: 3-isopropylmalate dehydrogenase (336 aa).

Positions 87, 97, 121, and 211 each coordinate substrate. Positions 211, 235, and 239 each coordinate Mg(2+). 271 to 283 (GSAPDIAGQGIAD) lines the NAD(+) pocket.

It belongs to the isocitrate and isopropylmalate dehydrogenases family. LeuB type 2 subfamily. As to quaternary structure, homodimer. The cofactor is Mg(2+). Mn(2+) is required as a cofactor.

It is found in the cytoplasm. The catalysed reaction is (2R,3S)-3-isopropylmalate + NAD(+) = 4-methyl-2-oxopentanoate + CO2 + NADH. It functions in the pathway amino-acid biosynthesis; L-leucine biosynthesis; L-leucine from 3-methyl-2-oxobutanoate: step 3/4. Catalyzes the oxidation of 3-carboxy-2-hydroxy-4-methylpentanoate (3-isopropylmalate) to 3-carboxy-4-methyl-2-oxopentanoate. The product decarboxylates to 4-methyl-2 oxopentanoate. The chain is 3-isopropylmalate dehydrogenase from Mycobacterium bovis (strain ATCC BAA-935 / AF2122/97).